A 171-amino-acid polypeptide reads, in one-letter code: Probable chemoreceptor glutamine deamidase CheD 1 (171 aa).

Low complexity predominate over residues 1–18 (MTRTTGAAPDRAAPAAGE). The segment at 1–23 (MTRTTGAAPDRAAPAAGETPGGG) is disordered.

Belongs to the CheD family.

The enzyme catalyses L-glutaminyl-[protein] + H2O = L-glutamyl-[protein] + NH4(+). In terms of biological role, probably deamidates glutamine residues to glutamate on methyl-accepting chemotaxis receptors (MCPs), playing an important role in chemotaxis. The sequence is that of Probable chemoreceptor glutamine deamidase CheD 1 from Anaeromyxobacter dehalogenans (strain 2CP-C).